A 608-amino-acid polypeptide reads, in one-letter code: Growth hormone receptor (608 aa).

Positions 1-16 are cleaved as a signal peptide; sequence MDLRHLLFTLALVCAN. The Extracellular segment spans residues 17-237; sequence DSLSASDDLL…EFVHCAEEIE (221 aa). Intrachain disulfides connect cysteine 34–cysteine 44 and cysteine 72–cysteine 83. A glycan (N-linked (GlcNAc...) asparagine) is linked at asparagine 86. Cysteine 97 and cysteine 111 are disulfide-bonded. The 105-residue stretch at 122 to 226 folds into the Fibronectin type-III domain; that stretch reads PPVHLNWTLL…ILYVSFTQAG (105 aa). N-linked (GlcNAc...) asparagine glycosylation is found at asparagine 127, asparagine 132, and asparagine 171. Residues 211-215 carry the WSXWS motif motif; that stretch reads FGEFS. Residues 238-261 form a helical membrane-spanning segment; that stretch reads FPWFLVVVFGVCGLAVTAILILLS. Topologically, residues 262-608 are cytoplasmic; sequence KQPRLKMLIF…STDQLNKIMP (347 aa). The required for JAK2 binding stretch occupies residues 267-352; sequence KMLIFPPVPV…HLKSHSCLGA (86 aa). The short motif at 270 to 278 is the Box 1 motif element; sequence IFPPVPVPK. Residues 313–322 carry the UbE motif motif; sequence DLWVEFIELD. 2 stretches are compositionally biased toward polar residues: residues 413 to 426 and 438 to 451; these read ANTDTQQPHTSTQS and STDSANPSVQTQLS. The disordered stretch occupies residues 413-451; sequence ANTDTQQPHTSTQSESRESWPPFADSTDSANPSVQTQLS.

This sequence belongs to the type I cytokine receptor family. Type 1 subfamily. In terms of processing, on GH binding, proteolytically cleaved, in vitro, to produce GHBP. In terms of tissue distribution, broad specificity.

It localises to the cell membrane. It is found in the secreted. Its function is as follows. Receptor for pituitary gland growth hormone (GH1) involved in regulating postnatal body growth. On ligand binding, couples to the JAK2/STAT5 pathway. The soluble form (GHBP) acts as a reservoir of growth hormone in plasma and may be a modulator/inhibitor of GH signaling. In Gallus gallus (Chicken), this protein is Growth hormone receptor (GHR).